The primary structure comprises 109 residues: Class I hydrophobin dewE (109 aa).

The first 20 residues, 1 to 20 (MKVATALSVLAVAGSALASA), serve as a signal peptide directing secretion. Cystine bridges form between cysteine 34–cysteine 87, cysteine 40–cysteine 81, cysteine 41–cysteine 74, and cysteine 88–cysteine 102.

Belongs to the fungal hydrophobin family. As to quaternary structure, self-assembles to form functional amyloid fibrils called rodlets. Self-assembly into fibrillar rodlets occurs spontaneously at hydrophobic:hydrophilic interfaces and the rodlets further associate laterally to form amphipathic monolayers.

The protein localises to the secreted. Its subcellular location is the spore wall. Its function is as follows. Aerial growth, conidiation, and dispersal of filamentous fungi in the environment rely upon a capability of their secreting small amphipathic proteins called hydrophobins (HPBs) with low sequence identity. Class I can self-assemble into an outermost layer of rodlet bundles on aerial cell surfaces, conferring cellular hydrophobicity that supports fungal growth, development and dispersal; whereas Class II form highly ordered films at water-air interfaces through intermolecular interactions but contribute nothing to the rodlet structure. DewE is a class I hydrophobin that contributes to the hydrophobicity of the spore surface. The chain is Class I hydrophobin dewE from Emericella nidulans (strain FGSC A4 / ATCC 38163 / CBS 112.46 / NRRL 194 / M139) (Aspergillus nidulans).